The chain runs to 257 residues: Imidazole glycerol phosphate synthase subunit HisF (257 aa).

Residues D12 and D131 contribute to the active site.

The protein belongs to the HisA/HisF family. As to quaternary structure, heterodimer of HisH and HisF.

The protein localises to the cytoplasm. It carries out the reaction 5-[(5-phospho-1-deoxy-D-ribulos-1-ylimino)methylamino]-1-(5-phospho-beta-D-ribosyl)imidazole-4-carboxamide + L-glutamine = D-erythro-1-(imidazol-4-yl)glycerol 3-phosphate + 5-amino-1-(5-phospho-beta-D-ribosyl)imidazole-4-carboxamide + L-glutamate + H(+). The protein operates within amino-acid biosynthesis; L-histidine biosynthesis; L-histidine from 5-phospho-alpha-D-ribose 1-diphosphate: step 5/9. Functionally, IGPS catalyzes the conversion of PRFAR and glutamine to IGP, AICAR and glutamate. The HisF subunit catalyzes the cyclization activity that produces IGP and AICAR from PRFAR using the ammonia provided by the HisH subunit. The sequence is that of Imidazole glycerol phosphate synthase subunit HisF from Paraburkholderia xenovorans (strain LB400).